Here is a 278-residue protein sequence, read N- to C-terminus: 4-hydroxy-3-methylbut-2-enyl diphosphate reductase (278 aa).

C12 provides a ligand contact to [4Fe-4S] cluster. (2E)-4-hydroxy-3-methylbut-2-enyl diphosphate-binding residues include H36 and H70. The dimethylallyl diphosphate site is built by H36 and H70. Isopentenyl diphosphate-binding residues include H36 and H70. A [4Fe-4S] cluster-binding site is contributed by C92. A (2E)-4-hydroxy-3-methylbut-2-enyl diphosphate-binding site is contributed by H120. H120 is a dimethylallyl diphosphate binding site. H120 is an isopentenyl diphosphate binding site. Catalysis depends on E122, which acts as the Proton donor. T158 contacts (2E)-4-hydroxy-3-methylbut-2-enyl diphosphate. Residue C186 coordinates [4Fe-4S] cluster. 3 residues coordinate (2E)-4-hydroxy-3-methylbut-2-enyl diphosphate: S214, N216, and S258. S214, N216, and S258 together coordinate dimethylallyl diphosphate. S214, N216, and S258 together coordinate isopentenyl diphosphate.

This sequence belongs to the IspH family. [4Fe-4S] cluster is required as a cofactor.

It carries out the reaction isopentenyl diphosphate + 2 oxidized [2Fe-2S]-[ferredoxin] + H2O = (2E)-4-hydroxy-3-methylbut-2-enyl diphosphate + 2 reduced [2Fe-2S]-[ferredoxin] + 2 H(+). It catalyses the reaction dimethylallyl diphosphate + 2 oxidized [2Fe-2S]-[ferredoxin] + H2O = (2E)-4-hydroxy-3-methylbut-2-enyl diphosphate + 2 reduced [2Fe-2S]-[ferredoxin] + 2 H(+). The protein operates within isoprenoid biosynthesis; dimethylallyl diphosphate biosynthesis; dimethylallyl diphosphate from (2E)-4-hydroxy-3-methylbutenyl diphosphate: step 1/1. It functions in the pathway isoprenoid biosynthesis; isopentenyl diphosphate biosynthesis via DXP pathway; isopentenyl diphosphate from 1-deoxy-D-xylulose 5-phosphate: step 6/6. Catalyzes the conversion of 1-hydroxy-2-methyl-2-(E)-butenyl 4-diphosphate (HMBPP) into a mixture of isopentenyl diphosphate (IPP) and dimethylallyl diphosphate (DMAPP). Acts in the terminal step of the DOXP/MEP pathway for isoprenoid precursor biosynthesis. This Campylobacter lari (strain RM2100 / D67 / ATCC BAA-1060) protein is 4-hydroxy-3-methylbut-2-enyl diphosphate reductase.